The chain runs to 223 residues: Ribosomal RNA small subunit methyltransferase G (223 aa).

Residues Gly-85, Phe-90, and Arg-154 each contribute to the S-adenosyl-L-methionine site.

This sequence belongs to the methyltransferase superfamily. RNA methyltransferase RsmG family.

It localises to the cytoplasm. It catalyses the reaction guanosine(527) in 16S rRNA + S-adenosyl-L-methionine = N(7)-methylguanosine(527) in 16S rRNA + S-adenosyl-L-homocysteine. In terms of biological role, specifically methylates the N7 position of guanine in position 527 of 16S rRNA. This Rhodopseudomonas palustris (strain ATCC BAA-98 / CGA009) protein is Ribosomal RNA small subunit methyltransferase G.